We begin with the raw amino-acid sequence, 204 residues long: Urease accessory protein UreG (204 aa).

15-22 (GPVGSGKT) contacts GTP.

The protein belongs to the SIMIBI class G3E GTPase family. UreG subfamily. As to quaternary structure, homodimer. UreD, UreF and UreG form a complex that acts as a GTP-hydrolysis-dependent molecular chaperone, activating the urease apoprotein by helping to assemble the nickel containing metallocenter of UreC. The UreE protein probably delivers the nickel.

It is found in the cytoplasm. In terms of biological role, facilitates the functional incorporation of the urease nickel metallocenter. This process requires GTP hydrolysis, probably effectuated by UreG. The sequence is that of Urease accessory protein UreG from Methylobacterium sp. (strain 4-46).